We begin with the raw amino-acid sequence, 288 residues long: Elongation factor Ts (288 aa).

Residues 82–85 (TDFV) form an involved in Mg(2+) ion dislocation from EF-Tu region.

This sequence belongs to the EF-Ts family.

The protein localises to the cytoplasm. In terms of biological role, associates with the EF-Tu.GDP complex and induces the exchange of GDP to GTP. It remains bound to the aminoacyl-tRNA.EF-Tu.GTP complex up to the GTP hydrolysis stage on the ribosome. The chain is Elongation factor Ts from Pelodictyon phaeoclathratiforme (strain DSM 5477 / BU-1).